Here is a 237-residue protein sequence, read N- to C-terminus: Uridylate kinase (237 aa).

Residue 11-14 (KLSG) participates in ATP binding. A UMP-binding site is contributed by Gly-53. Residues Gly-54 and Arg-58 each coordinate ATP. UMP contacts are provided by residues Asp-73 and 134 to 141 (TGNPFFTT). The ATP site is built by Thr-161, Tyr-167, and Asp-170.

The protein belongs to the UMP kinase family. In terms of assembly, homohexamer.

The protein resides in the cytoplasm. It carries out the reaction UMP + ATP = UDP + ADP. It functions in the pathway pyrimidine metabolism; CTP biosynthesis via de novo pathway; UDP from UMP (UMPK route): step 1/1. With respect to regulation, inhibited by UTP. Functionally, catalyzes the reversible phosphorylation of UMP to UDP. This is Uridylate kinase from Nitrosomonas europaea (strain ATCC 19718 / CIP 103999 / KCTC 2705 / NBRC 14298).